The primary structure comprises 66 residues: ATP synthase protein 8 (66 aa).

A helical membrane pass occupies residues 8 to 24 (PWPMVIMSMILTLFYIT). Residue lysine 54 is modified to N6-acetyllysine; alternate. Residue lysine 54 is modified to N6-succinyllysine; alternate. N6-acetyllysine is present on lysine 57.

The protein belongs to the ATPase protein 8 family. F-type ATPases have 2 components, CF(1) - the catalytic core - and CF(0) - the membrane proton channel. Component of an ATP synthase complex composed of ATP5PB, ATP5MC1, ATP5F1E, ATP5PD, ATP5ME, ATP5PF, ATP5MF, MT-ATP6, MT-ATP8, ATP5F1A, ATP5F1B, ATP5F1D, ATP5F1C, ATP5PO, ATP5MG, ATP5MK and ATP5MJ. Interacts with PRICKLE3.

The protein localises to the mitochondrion membrane. Its function is as follows. Mitochondrial membrane ATP synthase (F(1)F(0) ATP synthase or Complex V) produces ATP from ADP in the presence of a proton gradient across the membrane which is generated by electron transport complexes of the respiratory chain. F-type ATPases consist of two structural domains, F(1) - containing the extramembraneous catalytic core and F(0) - containing the membrane proton channel, linked together by a central stalk and a peripheral stalk. During catalysis, ATP synthesis in the catalytic domain of F(1) is coupled via a rotary mechanism of the central stalk subunits to proton translocation. Part of the complex F(0) domain. Minor subunit located with subunit a in the membrane. The polypeptide is ATP synthase protein 8 (MT-ATP8) (Alouatta sara (Bolivian red howler monkey)).